A 201-amino-acid chain; its full sequence is Large ribosomal subunit protein uL4 (201 aa).

The disordered stretch occupies residues 45–71 (AQKTRAEVTGSGKKPWRQKGTGRARAG).

Belongs to the universal ribosomal protein uL4 family. In terms of assembly, part of the 50S ribosomal subunit.

Functionally, one of the primary rRNA binding proteins, this protein initially binds near the 5'-end of the 23S rRNA. It is important during the early stages of 50S assembly. It makes multiple contacts with different domains of the 23S rRNA in the assembled 50S subunit and ribosome. Its function is as follows. Forms part of the polypeptide exit tunnel. This chain is Large ribosomal subunit protein uL4, found in Shewanella halifaxensis (strain HAW-EB4).